Reading from the N-terminus, the 426-residue chain is MTHLLDDLAWRGLIAQSTDLEALRAAMNTGPITVYCGFDPTAPSLHIGHLVQILTLRRFQDAGHRPIALVGGATGLIGDPSGRTTERALNDPDVVAGWAERIHRQLAPFLDFTGERAGQPAIAVNNLEWTGRLTAIEFLRDVGKHFRVGRMLAKEVVAARLRSEQGISYTEFSYQILQSLDFLELYRRYRCVLQIGGIDQWGNLTSGIELIHKVEGVDVHALATPLVTKADGTKFGKTAGGAVWLDPALTSPYAFYQFWINTDDRDVPAYLRYFSLKNKDELEALEKDAGRDPAARLGQRALAEELTTLVHGATECGKVVAASAALFGRGELAGVEPETLAAALAEAGLVTMPFDPPPRVVDALVATGLVESRSAARRVISEGGAYVNNEKVTDVDAQIDPGRLLHGRWAVIRRGRRAVAGVERAG.

Tyr35 is an L-tyrosine binding site. A 'HIGH' region motif is present at residues 40-49 (PTAPSLHIGH). The L-tyrosine site is built by Tyr174 and Gln178. A 'KMSKS' region motif is present at residues 234–238 (KFGKT). Lys237 contributes to the ATP binding site. Residues 358-418 (PRVVDALVAT…WAVIRRGRRA (61 aa)) form the S4 RNA-binding domain.

This sequence belongs to the class-I aminoacyl-tRNA synthetase family. TyrS type 1 subfamily. Homodimer.

It is found in the cytoplasm. The enzyme catalyses tRNA(Tyr) + L-tyrosine + ATP = L-tyrosyl-tRNA(Tyr) + AMP + diphosphate + H(+). Catalyzes the attachment of tyrosine to tRNA(Tyr) in a two-step reaction: tyrosine is first activated by ATP to form Tyr-AMP and then transferred to the acceptor end of tRNA(Tyr). The sequence is that of Tyrosine--tRNA ligase from Acidothermus cellulolyticus (strain ATCC 43068 / DSM 8971 / 11B).